A 767-amino-acid chain; its full sequence is Protein hunchback (767 aa).

Disordered regions lie at residues 30 to 51 (EPGH…PIPS), 105 to 127 (QQQY…HLMG), and 174 to 212 (EKLQ…SNSS). Polar residues predominate over residues 39–51 (SVASSPRQSPIPS). Low complexity predominate over residues 105–117 (QQQYQQHFQAAQQ). Positions 200–212 (EPEKEHDQMSNSS) are enriched in basic and acidic residues. 4 C2H2-type zinc fingers span residues 242 to 264 (YKCK…TRTH), 271 to 293 (LQCP…IRKH), 299 to 321 (FQCD…RKSH), and 327 to 351 (YRCA…KYGH). Disordered stretches follow at residues 357–424 (LDED…TSQL), 518–570 (QLQQ…QPQQ), and 610–704 (GVMT…APPS). Residues 386–397 (IASGGSGSGSGS) are compositionally biased toward gly residues. The segment covering 518-527 (QLQQQNQQQS) has biased composition (low complexity). A compositionally biased stretch (acidic residues) spans 528–537 (DNEEEEQDDE). Positions 661-704 (ANTSASSTASSSGNSSNASSNSNGNSSSNSSSSGTNSAAAAPPS) are enriched in low complexity. 2 consecutive C2H2-type zinc fingers follow at residues 714 to 736 (YECK…MGYH) and 742 to 766 (FKCN…RNAH).

It belongs to the hunchback C2H2-type zinc-finger protein family.

The protein resides in the nucleus. Functionally, gap class segmentation protein that controls development of head structures. This chain is Protein hunchback (hb), found in Drosophila orena (Fruit fly).